Reading from the N-terminus, the 436-residue chain is ATP-dependent 6-phosphofructokinase (436 aa).

Residues G90, 155–156 (RG), and 180–183 (GDGT) each bind ATP. D181 contacts Mg(2+). Residues 209–211 (TID), 254–256 (MGR), E307, and 362–365 (YMIR) contribute to the substrate site. D211 acts as the Proton acceptor in catalysis.

This sequence belongs to the phosphofructokinase type A (PFKA) family. PPi-dependent PFK group II subfamily. Atypical ATP-dependent clade 'X' sub-subfamily. As to quaternary structure, homodimer. Aggregates to a homotetramer after activation by ATP. It depends on Mg(2+) as a cofactor.

Its subcellular location is the cytoplasm. It carries out the reaction beta-D-fructose 6-phosphate + ATP = beta-D-fructose 1,6-bisphosphate + ADP + H(+). It participates in carbohydrate degradation; glycolysis; D-glyceraldehyde 3-phosphate and glycerone phosphate from D-glucose: step 3/4. Its activity is regulated as follows. Activated by nucleoside triphosphates. Inhibited by phosphoenolpyruvate. EDTA and biphosphonates play the role of inhibitors of kinase activity. In terms of biological role, catalyzes the phosphorylation of D-fructose 6-phosphate to fructose 1,6-bisphosphate by ATP, the first committing step of glycolysis. This chain is ATP-dependent 6-phosphofructokinase (PPi-PFK), found in Entamoeba histolytica (strain ATCC 30459 / HM-1:IMSS / ABRM).